The primary structure comprises 389 residues: Metal tolerance protein 2 (389 aa).

Residues 1–81 are Cytoplasmic-facing; that stretch reads MGFRLAHLAA…GGEASERIFR (81 aa). A helical transmembrane segment spans residues 82 to 102; sequence LGLAADVVLTVGKAVTGYLSG. Residues 103–104 are Vacuolar-facing; the sequence is ST. A helical membrane pass occupies residues 105 to 125; sequence AIAADAAHSLSDIVLSGVALL. Residues 126–148 lie on the Cytoplasmic side of the membrane; it reads SYKAAKAPRDKEHPYGHGKFESL. A helical transmembrane segment spans residues 149-169; that stretch reads GALGISSMLLVTAGGIAWHAF. Topologically, residues 170–206 are vacuolar; sequence DVLQGVMSSAPDIIGNVSHAHHSHGSSGHHHGIDLEH. A helical membrane pass occupies residues 207 to 227; that stretch reads PILALSVTAFAISVKEGLYWI. Over 228 to 250 the chain is Cytoplasmic; sequence TKRAGEKEGSGLMKANAWHHRSD. A helical transmembrane segment spans residues 251–271; that stretch reads AISSVVALLGVGGSILGVPYL. Topologically, residues 272-275 are vacuolar; sequence DPLA. A helical membrane pass occupies residues 276 to 296; that stretch reads GLVVSGMILKAGVHTGYESVL. Residues 297-389 are Cytoplasmic-facing; sequence ELVDAAVDPS…SLQPLNQNAL (93 aa).

The protein belongs to the cation diffusion facilitator (CDF) transporter (TC 2.A.4) family. SLC30A subfamily.

It is found in the vacuole membrane. Its function is as follows. Involved in sequestration of excess metal in the cytoplasm into vacuoles to maintain metal homeostasis. In Oryza sativa subsp. japonica (Rice), this protein is Metal tolerance protein 2 (MTP2).